A 485-amino-acid polypeptide reads, in one-letter code: Acyltransferase cm3D (485 aa).

Residue His-169 is the Proton acceptor of the active site.

It belongs to the plant acyltransferase family. Monomer.

Its pathway is secondary metabolite biosynthesis. In terms of biological role, acyltransferase; part of the gene cluster that mediates the biosynthesis of beauveriolides I and III, cyclodepsipeptides acting as inhibitors of the acyl-CoA:cholesterol acyltransferase. The HR-PKS cm3B initiates the biosynthesis of beauveriolides by iteratively catalyzing the formation of the linear polyketide chain. The ATP-dependent acetyl-CoA ligase cm3D converts the polyketide carboxylic acid to a CoA thioester which id shuttled to the first T domain in the NRPS cm3A by the acetyltransferase cm3C. Cm3A contains 13 domains and assembles the polyketide chain, L-phenylalanine, L-alanine, and D-leucine (or D-allo-isoleucine) to form beauveriolide I (or beauveriolide III). The production of both beauveriolides I and III suggests the substrate adaptability of cm3B, using different amino acids as substrates. This chain is Acyltransferase cm3D, found in Cordyceps militaris (strain CM01) (Caterpillar fungus).